The following is a 33-amino-acid chain: uncharacterized protein (33 aa).

The disordered stretch occupies residues 1 to 33 (MQPGTGLSFDISQILKQGSDPKQKLPERQAIVL).

This is an uncharacterized protein from Caenorhabditis elegans.